A 197-amino-acid chain; its full sequence is EF-hand calcium-binding domain-containing protein 9 (197 aa).

2 residues coordinate Ca(2+): D58 and D69. EF-hand domains lie at 59–94 (LKKA…LLAH), 100–135 (GQFM…FLFN), and 136–171 (IQKQ…YTDK). 4 residues coordinate Ca(2+): D149, D153, R155, and E160. A compositionally biased stretch (basic and acidic residues) spans 177–188 (KTEEKEKGERKR). Residues 177-197 (KTEEKEKGERKRSLYSKCHIK) form a disordered region.

As to quaternary structure, component of the CatSper complex or CatSpermasome composed of the core pore-forming members CATSPER1, CATSPER2, CATSPER3 and CATSPER4 as well as auxiliary members CATSPERB, CATSPERG, CATSPERD, CATSPERE, CATSPERZ, C2CD6/CATSPERT, TMEM249, TMEM262 and EFCAB9. HSPA1 may be an additional auxiliary complex member. The core complex members CATSPER1, CATSPER2, CATSPER3 and CATSPER4 form a heterotetrameric channel. The auxiliary CATSPERB, CATSPERG, CATSPERD and CATSPERE subunits form a pavilion-like structure over the pore which stabilizes the complex through interactions with CATSPER4, CATSPER3, CATSPER1 and CATSPER2 respectively. TMEM262/CATSPERH interacts with CATSPERB, further stabilizing the complex. C2CD6/CATSPERT interacts at least with CATSPERD and is required for targeting the CatSper complex in the flagellar membrane. Interacts with CATSPERZ; the interaction is direct, Ca(2+)-dependent and connects EFCAB9 with the CatSper complex. Dissociates from CATSPERZ at elevated pH.

It localises to the cytoplasm. Its subcellular location is the cell projection. It is found in the cilium. The protein resides in the flagellum. Its function is as follows. Auxiliary component of the CatSper complex, a complex involved in sperm cell hyperactivation. pH-dependent Ca(2+) sensor required to activate the CatSper channel. Sperm cell hyperactivation is needed for sperm motility which is essential late in the preparation of sperm for fertilization. Associates with the CatSper complex via direct interaction with CATSPERZ, and senses intracellular Ca(2+). Together with CATSPERZ, associates with the CatSper channel pore and is required for the two-row structure of each single CatSper channel. This Homo sapiens (Human) protein is EF-hand calcium-binding domain-containing protein 9.